We begin with the raw amino-acid sequence, 403 residues long: tRNA pseudouridine synthase 4 (403 aa).

Aspartate 75 (nucleophile) is an active-site residue.

The protein belongs to the pseudouridine synthase TruB family.

It is found in the nucleus. The protein resides in the mitochondrion. The catalysed reaction is uridine(55) in tRNA = pseudouridine(55) in tRNA. It catalyses the reaction a uridine in mRNA = a pseudouridine in mRNA. Responsible for synthesis of pseudouridine from uracil-55 in the psi GC loop of transfer RNAs. Also catalyzes pseudouridylation of mRNAs with the consensus sequence 5'-GGUUCRA-3'. The sequence is that of tRNA pseudouridine synthase 4 (PUS4) from Saccharomyces cerevisiae (strain ATCC 204508 / S288c) (Baker's yeast).